The primary structure comprises 307 residues: Putative oxidoreductase YceM (307 aa).

The protein belongs to the Gfo/Idh/MocA family.

The polypeptide is Putative oxidoreductase YceM (yceM) (Salmonella typhimurium (strain LT2 / SGSC1412 / ATCC 700720)).